The chain runs to 552 residues: CTP synthase (552 aa).

The amidoligase domain stretch occupies residues 1-270 (MTKYVFVTGG…DRIICEELKL (270 aa)). S13 contributes to the CTP binding site. Residue S13 coordinates UTP. ATP is bound by residues 14–19 (SLGKGI) and D71. The Mg(2+) site is built by D71 and E144. CTP is bound by residues 151–153 (DIE), 191–196 (KTKPTQ), and K227. Residues 191-196 (KTKPTQ) and K227 contribute to the UTP site. A Glutamine amidotransferase type-1 domain is found at 295 to 547 (TIGMVGKYVD…VEAAFANKQA (253 aa)). G356 is an L-glutamine binding site. C383 (nucleophile; for glutamine hydrolysis) is an active-site residue. L-glutamine contacts are provided by residues 384–387 (LGMQ), E407, and R473. Active-site residues include H520 and E522.

It belongs to the CTP synthase family. In terms of assembly, homotetramer.

The catalysed reaction is UTP + L-glutamine + ATP + H2O = CTP + L-glutamate + ADP + phosphate + 2 H(+). The enzyme catalyses L-glutamine + H2O = L-glutamate + NH4(+). It catalyses the reaction UTP + NH4(+) + ATP = CTP + ADP + phosphate + 2 H(+). The protein operates within pyrimidine metabolism; CTP biosynthesis via de novo pathway; CTP from UDP: step 2/2. With respect to regulation, allosterically activated by GTP, when glutamine is the substrate; GTP has no effect on the reaction when ammonia is the substrate. The allosteric effector GTP functions by stabilizing the protein conformation that binds the tetrahedral intermediate(s) formed during glutamine hydrolysis. Inhibited by the product CTP, via allosteric rather than competitive inhibition. Functionally, catalyzes the ATP-dependent amination of UTP to CTP with either L-glutamine or ammonia as the source of nitrogen. Regulates intracellular CTP levels through interactions with the four ribonucleotide triphosphates. In Burkholderia ambifaria (strain ATCC BAA-244 / DSM 16087 / CCUG 44356 / LMG 19182 / AMMD) (Burkholderia cepacia (strain AMMD)), this protein is CTP synthase.